An 87-amino-acid polypeptide reads, in one-letter code: Small ribosomal subunit protein bS20 (87 aa).

It belongs to the bacterial ribosomal protein bS20 family.

In terms of biological role, binds directly to 16S ribosomal RNA. This Parvibaculum lavamentivorans (strain DS-1 / DSM 13023 / NCIMB 13966) protein is Small ribosomal subunit protein bS20.